The sequence spans 476 residues: Adenosylhomocysteinase (476 aa).

3 residues coordinate substrate: T67, D142, and E202. NAD(+) is bound at residue 203 to 205; that stretch reads TTT. Substrate contacts are provided by K232 and D236. NAD(+) is bound by residues N237, 266–271, E289, N324, 345–347, and N390; these read GYGDVG and IGH.

The protein belongs to the adenosylhomocysteinase family. The cofactor is NAD(+).

It is found in the cytoplasm. It catalyses the reaction S-adenosyl-L-homocysteine + H2O = L-homocysteine + adenosine. It functions in the pathway amino-acid biosynthesis; L-homocysteine biosynthesis; L-homocysteine from S-adenosyl-L-homocysteine: step 1/1. Its function is as follows. May play a key role in the regulation of the intracellular concentration of adenosylhomocysteine. This Synechococcus sp. (strain CC9902) protein is Adenosylhomocysteinase.